The following is a 511-amino-acid chain: Maturase K (511 aa).

It belongs to the intron maturase 2 family. MatK subfamily.

It localises to the plastid. Its subcellular location is the chloroplast. Usually encoded in the trnK tRNA gene intron. Probably assists in splicing its own and other chloroplast group II introns. The polypeptide is Maturase K (Hordeum bulbosum (Bulbous barley)).